Consider the following 897-residue polypeptide: Protein translocase subunit SecA (897 aa).

ATP contacts are provided by residues glutamine 87, 105-109 (GEGKT), and aspartate 512. Positions 846–897 (EEEQQKQARKKMVFNLVDEDETSEPSKSKKLAGRNEPCPCGSGKKYKKCCGK) are disordered. Zn(2+) contacts are provided by cysteine 883, cysteine 885, cysteine 894, and cysteine 895.

Belongs to the SecA family. As to quaternary structure, monomer and homodimer. Part of the essential Sec protein translocation apparatus which comprises SecA, SecYEG and auxiliary proteins SecDF-YajC and YidC. Zn(2+) is required as a cofactor.

It localises to the cell inner membrane. It is found in the cytoplasm. It catalyses the reaction ATP + H2O + cellular proteinSide 1 = ADP + phosphate + cellular proteinSide 2.. Part of the Sec protein translocase complex. Interacts with the SecYEG preprotein conducting channel. Has a central role in coupling the hydrolysis of ATP to the transfer of proteins into and across the cell membrane, serving as an ATP-driven molecular motor driving the stepwise translocation of polypeptide chains across the membrane. This chain is Protein translocase subunit SecA, found in Geobacter sulfurreducens (strain ATCC 51573 / DSM 12127 / PCA).